The primary structure comprises 228 residues: Lipoprotein-releasing system ATP-binding protein LolD (228 aa).

Positions 7 to 228 constitute an ABC transporter domain; that stretch reads LNCQNLTKDY…MQDGVLRPEM (222 aa). 43 to 50 contacts ATP; it reads GSSGSGKS.

This sequence belongs to the ABC transporter superfamily. Lipoprotein translocase (TC 3.A.1.125) family. In terms of assembly, the complex is composed of two ATP-binding proteins (LolD) and two transmembrane proteins (LolC and LolE).

It localises to the cell inner membrane. Its function is as follows. Part of the ABC transporter complex LolCDE involved in the translocation of mature outer membrane-directed lipoproteins, from the inner membrane to the periplasmic chaperone, LolA. Responsible for the formation of the LolA-lipoprotein complex in an ATP-dependent manner. This chain is Lipoprotein-releasing system ATP-binding protein LolD, found in Mannheimia succiniciproducens (strain KCTC 0769BP / MBEL55E).